A 592-amino-acid chain; its full sequence is Calnexin (592 aa).

Positions 1–20 (MEGKWLLCMLLVLGTAIVEA) are cleaved as a signal peptide. Topologically, residues 21–481 (HDGHDDDVID…QMIEAAEERP (461 aa)) are lumenal. Residues S74 and D117 each contribute to the Ca(2+) site. An N6-acetyllysine modification is found at K137. C160 and C194 are disulfide-bonded. Positions 164, 166, 185, and 192 each coordinate an alpha-D-glucoside. Positions 260–345 (GNLLNDMTPP…AEKPEDWDED (86 aa)) are disordered. Residues 274–319 (REIEDPEDRKPEDWDERPKIPDPEAVKPDDWDEDAPAKIPDEEATK) show a composition bias toward basic and acidic residues. Residues 276 to 409 (IEDPEDRKPE…RKIPNPDFFE (134 aa)) form a p domain (Extended arm) region. 5 repeat units span residues 278 to 290 (DPED…WDER), 295 to 307 (DPEA…WDED), 314 to 326 (DEEA…WLDD), 333 to 345 (DPDA…WDED), and 348 to 358 (GEWEAPQIANP). 2 4 X approximate repeats regions span residues 278 to 345 (DPED…WDED) and 348 to 405 (GEWE…IPNP). Residues 323-345 (WLDDEPEYVPDPDAEKPEDWDED) are compositionally biased toward acidic residues. Positions 326–359 (DEPEYVPDPDAEKPEDWDEDMDGEWEAPQIANPR) are interaction with PPIB. The cysteines at positions 360 and 366 are disulfide-linked. A run of 3 repeats spans residues 367–377 (GVWQRPVIDNP), 381–391 (GKWKPPMIDNP), and 395–405 (GIWKPRKIPNP). E425 contacts an alpha-D-glucoside. D436 provides a ligand contact to Ca(2+). The helical transmembrane segment at 482–502 (WLWVVYILTVALPVFLVILFC) threads the bilayer. S-palmitoyl cysteine attachment occurs at residues C502 and C503. Residues 503 to 592 (CSGKKQTSGM…SPRNRKPRRE (90 aa)) are Cytoplasmic-facing. The segment at 503–592 (CSGKKQTSGM…SPRNRKPRRE (90 aa)) is sufficient to mediate interaction with SGIP1. Residues 511-592 (GMEYKKTDAP…SPRNRKPRRE (82 aa)) are disordered. The span at 525–547 (KEEEEEKEEEKDKGDEEEEGEEK) shows a compositional bias: acidic residues. Phosphoserine is present on S554. T562 carries the phosphothreonine modification. Position 564 is a phosphoserine; by MAPK3 (S564). S583 is modified (phosphoserine).

The protein belongs to the calreticulin family. Interacts with MAPK3/ERK1. Interacts with KCNH2. Associates with ribosomes. Interacts with SGIP1; involved in negative regulation of endocytosis. The palmitoylated form interacts with the ribosome-translocon complex component SSR1, promoting efficient folding of glycoproteins. Interacts with SERPINA2P/SERPINA2 and with the S and Z variants of SERPINA1. Interacts with PPIB. Interacts with ZNRF4. Interacts with SMIM22. Interacts with TMX2. Interacts with TMEM35A/NACHO. Interacts with CHRNA7. Interacts with reticulophagy regulators RETREG2 and RETREG3. Interacts with DNM1L; may form part of a larger protein complex at the ER-mitochondrial interface during mitochondrial fission. Interacts with ADAM7. As to quaternary structure, (Microbial infection) Interacts with HBV large envelope protein, isoform L. In terms of assembly, (Microbial infection) Interacts with HBV large envelope protein, isoform M; this association may be essential for isoform M proper secretion. Post-translationally, phosphorylated at Ser-564 by MAPK3/ERK1. Phosphorylation by MAPK3/ERK1 increases its association with ribosomes. In terms of processing, palmitoylation by DHHC6 leads to the preferential localization to the perinuclear rough ER. It mediates the association of calnexin with the ribosome-translocon complex (RTC) which is required for efficient folding of glycosylated proteins. Ubiquitinated, leading to proteasomal degradation. Probably ubiquitinated by ZNRF4.

The protein localises to the endoplasmic reticulum membrane. It localises to the mitochondrion membrane. The protein resides in the melanosome membrane. In terms of biological role, calcium-binding protein that interacts with newly synthesized monoglucosylated glycoproteins in the endoplasmic reticulum. It may act in assisting protein assembly and/or in the retention within the ER of unassembled protein subunits. It seems to play a major role in the quality control apparatus of the ER by the retention of incorrectly folded proteins. Associated with partial T-cell antigen receptor complexes that escape the ER of immature thymocytes, it may function as a signaling complex regulating thymocyte maturation. Additionally it may play a role in receptor-mediated endocytosis at the synapse. In Homo sapiens (Human), this protein is Calnexin (CANX).